A 246-amino-acid chain; its full sequence is MLGRQRIWWHLLPLLFLPFCLCQDEYMESPQAGGLPPDCSKCCHGDYGFRGYQGPPGPPGPPGIPGNHGNNGNNGATGHEGAKGEKGDKGDLGPRGERGQHGPKGEKGYPGVPPELQIAFMASLATHFSNQNSGIIFSSVETNIGNFFDVMTGRFGAPVSGVYFFTFSMMKHEDVEEVYVYLMHNGNTVFSMYSYETKGKSDTSSNHAVLKLAKGDEVWLRMGNGALHGDHQRFSTFAGFLLFETK.

The signal sequence occupies residues 1–22; it reads MLGRQRIWWHLLPLLFLPFCLC. Positions 51–113 constitute a Collagen-like domain; that stretch reads GYQGPPGPPG…KGEKGYPGVP (63 aa). The tract at residues 53-112 is disordered; the sequence is QGPPGPPGPPGIPGNHGNNGNNGATGHEGAKGEKGDKGDLGPRGERGQHGPKGEKGYPGV. The span at 55-64 shows a compositional bias: pro residues; it reads PPGPPGPPGI. Over residues 65–74 the composition is skewed to low complexity; that stretch reads PGNHGNNGNN. Residues 80 to 107 show a composition bias toward basic and acidic residues; that stretch reads EGAKGEKGDKGDLGPRGERGQHGPKGEK. Positions 113–246 constitute a C1q domain; sequence PPELQIAFMA…FAGFLLFETK (134 aa).

It localises to the secreted. The chain is Complement C1q tumor necrosis factor-related protein 3 (C1qtnf3) from Mus musculus (Mouse).